The primary structure comprises 164 residues: MKIIGIDPGLRNMGWGVIAVEGPRLRHLDNGIVHSEAGDLGPRLAALYRGLCAVIVRHAPDAAAVEQTFVNKDALGTLKLGQARGIALLAPAEAGLEIGEYAPNAVKKAVVGVGHAAKEQIQHMVRFMLPGVEFAGPDAADALAVAICHAHHLQGRALRIKASA.

Catalysis depends on residues D7, E66, and D138. Mg(2+) is bound by residues D7, E66, and D138.

This sequence belongs to the RuvC family. In terms of assembly, homodimer which binds Holliday junction (HJ) DNA. The HJ becomes 2-fold symmetrical on binding to RuvC with unstacked arms; it has a different conformation from HJ DNA in complex with RuvA. In the full resolvosome a probable DNA-RuvA(4)-RuvB(12)-RuvC(2) complex forms which resolves the HJ. Requires Mg(2+) as cofactor.

It localises to the cytoplasm. The enzyme catalyses Endonucleolytic cleavage at a junction such as a reciprocal single-stranded crossover between two homologous DNA duplexes (Holliday junction).. The RuvA-RuvB-RuvC complex processes Holliday junction (HJ) DNA during genetic recombination and DNA repair. Endonuclease that resolves HJ intermediates. Cleaves cruciform DNA by making single-stranded nicks across the HJ at symmetrical positions within the homologous arms, yielding a 5'-phosphate and a 3'-hydroxyl group; requires a central core of homology in the junction. The consensus cleavage sequence is 5'-(A/T)TT(C/G)-3'. Cleavage occurs on the 3'-side of the TT dinucleotide at the point of strand exchange. HJ branch migration catalyzed by RuvA-RuvB allows RuvC to scan DNA until it finds its consensus sequence, where it cleaves and resolves the cruciform DNA. This chain is Crossover junction endodeoxyribonuclease RuvC, found in Paracoccus denitrificans (strain Pd 1222).